Reading from the N-terminus, the 205-residue chain is Dephospho-CoA kinase (205 aa).

The 199-residue stretch at 7-205 folds into the DPCK domain; that stretch reads IIGVTGRIAS…QGIINYERFE (199 aa). ATP is bound at residue 15–20; the sequence is ASGKDT.

This sequence belongs to the CoaE family.

The protein resides in the cytoplasm. The enzyme catalyses 3'-dephospho-CoA + ATP = ADP + CoA + H(+). Its pathway is cofactor biosynthesis; coenzyme A biosynthesis; CoA from (R)-pantothenate: step 5/5. In terms of biological role, catalyzes the phosphorylation of the 3'-hydroxyl group of dephosphocoenzyme A to form coenzyme A. The chain is Dephospho-CoA kinase from Borreliella burgdorferi (strain ATCC 35210 / DSM 4680 / CIP 102532 / B31) (Borrelia burgdorferi).